A 311-amino-acid polypeptide reads, in one-letter code: Small ribosomal subunit biogenesis GTPase RsgA (311 aa).

Residues 88 to 246 (SKEKEQVIAA…VIDTPGIREF (159 aa)) form the CP-type G domain. Residues 137–140 (NKID) and 188–196 (GHSGVGKST) each bind GTP. Positions 270, 275, 277, and 283 each coordinate Zn(2+).

It belongs to the TRAFAC class YlqF/YawG GTPase family. RsgA subfamily. Monomer. Associates with 30S ribosomal subunit, binds 16S rRNA. The cofactor is Zn(2+).

The protein localises to the cytoplasm. In terms of biological role, one of several proteins that assist in the late maturation steps of the functional core of the 30S ribosomal subunit. Helps release RbfA from mature subunits. May play a role in the assembly of ribosomal proteins into the subunit. Circularly permuted GTPase that catalyzes slow GTP hydrolysis, GTPase activity is stimulated by the 30S ribosomal subunit. The sequence is that of Small ribosomal subunit biogenesis GTPase RsgA from Chlorobaculum parvum (strain DSM 263 / NCIMB 8327) (Chlorobium vibrioforme subsp. thiosulfatophilum).